Here is a 963-residue protein sequence, read N- to C-terminus: Longitudinals lacking protein, isoforms J/P/Q/S/Z (963 aa).

One can recognise a BTB domain in the interval 32 to 97 (VDCTLAAEGK…MYRGEVNISQ (66 aa)). 4 disordered regions span residues 115–200 (LSDN…SSVL), 228–340 (SSGP…ASAS), 447–469 (DAQQRDPQDEAGQNEGGESRIRV), and 482–520 (GKSSDEPSDKLTQSKKSLISDAKTTNKTSTPIRPKVSTT). Composition is skewed to low complexity over residues 162–175 (SGDVSGSREGSSSP), 228–251 (SSGPAAGTSSQASSTQQQQPLTST), 263–293 (TSSTAAPASGASASAAVQQAHLHQQQAQTTS), and 329–340 (NSATGPNPASAS). The segment covering 491-512 (KLTQSKKSLISDAKTTNKTSTP) has biased composition (polar residues). A C2H2-type 1; degenerate zinc finger spans residues 849–871 (WVCRNCNRTYKWKNSLKCHLKNE). The C2H2-type 2; degenerate zinc finger occupies 878–901 (YFCSKMCGYATNVHSNLKRHLNTK). The interval 900–963 (TKCRDREKDA…YTLVFQNDSA (64 aa)) is disordered. A compositionally biased stretch (basic and acidic residues) spans 901–915 (KCRDREKDADDEKKP). Positions 937 to 953 (SSSNNNNNGGGSSTSST) are enriched in low complexity. A compositionally biased stretch (polar residues) spans 954 to 963 (YTLVFQNDSA).

In terms of tissue distribution, by stage 11, isoform Q, isoform P and isoform Z are expressed throughout the mesoderm. From stage 15, expression of isoform P expands to all tissues, whereas expression of isoform Z and isoform Q becomes restricted during later stages; starting from stage 14 to 16, isoform Z is expressed in muscle, and isoform Q and isoform Z are expressed in the CNS. For some isoforms, expression is also seen in specific types of cells in the embryo; isoform Z is expressed in the ventral furrow at stage 5, and isoform Q is expressed around the tracheal pits at stage 11. Isoform Z also shows transient enrichment in a dorsal cell layer in the CNS at stages 13 and 14.

The protein resides in the nucleus. Putative transcription factor required for axon growth and guidance in the central and peripheral nervous systems. Repels CNS axons away from the midline by promoting the expression of the midline repellent sli and its receptor robo. The polypeptide is Longitudinals lacking protein, isoforms J/P/Q/S/Z (Drosophila melanogaster (Fruit fly)).